The following is a 253-amino-acid chain: HTH-type transcriptional regulator YdeO (253 aa).

Positions 137–233 (GKVRNIVNMK…GNSPKRVSKE (97 aa)) constitute an HTH araC/xylS-type domain. 2 DNA-binding regions (H-T-H motif) span residues 154 to 175 (KDIC…KQEQ) and 200 to 223 (VNKI…RKHF).

In terms of biological role, induces the expression of gadE and mdtEF. Could also regulate the expression of other genes involved in acid resistance. The chain is HTH-type transcriptional regulator YdeO (ydeO) from Escherichia coli (strain K12).